Reading from the N-terminus, the 146-residue chain is D-aminoacyl-tRNA deacylase (146 aa).

Residues 138–139 carry the Gly-cisPro motif, important for rejection of L-amino acids motif; sequence GP.

It belongs to the DTD family. As to quaternary structure, homodimer.

It localises to the cytoplasm. It carries out the reaction glycyl-tRNA(Ala) + H2O = tRNA(Ala) + glycine + H(+). The catalysed reaction is a D-aminoacyl-tRNA + H2O = a tRNA + a D-alpha-amino acid + H(+). Its function is as follows. An aminoacyl-tRNA editing enzyme that deacylates mischarged D-aminoacyl-tRNAs. Also deacylates mischarged glycyl-tRNA(Ala), protecting cells against glycine mischarging by AlaRS. Acts via tRNA-based rather than protein-based catalysis; rejects L-amino acids rather than detecting D-amino acids in the active site. By recycling D-aminoacyl-tRNA to D-amino acids and free tRNA molecules, this enzyme counteracts the toxicity associated with the formation of D-aminoacyl-tRNA entities in vivo and helps enforce protein L-homochirality. In Xanthomonas axonopodis pv. citri (strain 306), this protein is D-aminoacyl-tRNA deacylase.